Reading from the N-terminus, the 71-residue chain is MANLKAVFLICIVAFIAFQCVVAEPAAEDSIVVKRSIGSALKKALPVAKKIGKIALPIAKAALPVAAGLVG.

A signal peptide spans 1 to 23 (MANLKAVFLICIVAFIAFQCVVA). Propeptides lie at residues 24-35 (EPAAEDSIVVKR) and 65-71 (VAAGLVG).

In terms of assembly, homomer of four to six subunits.

It is found in the secreted. Functionally, female-specific peptides with potent activity against Gram-positive and Gram-negative bacteria. They have as well hemolytic activity. In Ceratitis capitata (Mediterranean fruit fly), this protein is Ceratotoxin-A (CTXA2).